Here is a 183-residue protein sequence, read N- to C-terminus: Inner membrane-spanning protein YciB (183 aa).

5 helical membrane-spanning segments follow: residues 4–24, 50–70, 72–92, 119–139, and 149–169; these read FIEF…DIYM, MQLF…FFHD, TFIK…LLIS, VNLG…YVAF, and FKVF…GVYL.

This sequence belongs to the YciB family.

It localises to the cell inner membrane. Functionally, plays a role in cell envelope biogenesis, maintenance of cell envelope integrity and membrane homeostasis. This Aeromonas hydrophila subsp. hydrophila (strain ATCC 7966 / DSM 30187 / BCRC 13018 / CCUG 14551 / JCM 1027 / KCTC 2358 / NCIMB 9240 / NCTC 8049) protein is Inner membrane-spanning protein YciB.